Reading from the N-terminus, the 548-residue chain is Putative F-box protein At1g33020 (548 aa).

Residues 4-53 (AENLDSIPTDLILEIFSRMSTKSIGRCRCVSKLWKSMLGHPYFTELFLTR) enclose the F-box domain. The interval 380–404 (KPISPPKQKPKPPSTETSSREDHQG) is disordered. Over residues 382 to 392 (ISPPKQKPKPP) the composition is skewed to pro residues.

This Arabidopsis thaliana (Mouse-ear cress) protein is Putative F-box protein At1g33020.